A 231-amino-acid chain; its full sequence is Ubiquinone biosynthesis protein coq-4, mitochondrial (231 aa).

Positions 133, 134, 137, and 149 each coordinate Zn(2+).

The protein belongs to the COQ4 family. As to quaternary structure, component of a multi-subunit COQ enzyme complex. It depends on Zn(2+) as a cofactor.

Its subcellular location is the mitochondrion inner membrane. The catalysed reaction is a 4-hydroxy-3-methoxy-5-(all-trans-polyprenyl)benzoate + H(+) = a 2-methoxy-6-(all-trans-polyprenyl)phenol + CO2. It participates in cofactor biosynthesis; ubiquinone biosynthesis. Lyase that catalyzes the C1-decarboxylation of 4-hydroxy-3-methoxy-5-(all-trans-polyprenyl)benzoic acid into 2-methoxy-6-(all-trans-polyprenyl)phenol during ubiquinone biosynthesis. The sequence is that of Ubiquinone biosynthesis protein coq-4, mitochondrial from Caenorhabditis elegans.